The sequence spans 715 residues: Staphylocoagulase (715 aa).

The N-terminal stretch at 1–26 (MKKQIISLGALAVASSLFTWDNKADA) is a signal peptide. The segment covering 306-327 (KYGESETKSPVVKEENKVEDPQ) has biased composition (basic and acidic residues). Disordered regions lie at residues 306–348 (KYGE…EETT) and 430–470 (QGTE…FNKT). Positions 431 to 443 (GTESTLKGIQGES) are enriched in polar residues. 8 consecutive repeat copies span residues 495–521 (ARPRFNKPSETNAYNVTTNQDGTVSYG), 522–548 (ARPTQNKASETNAYNVTTHANGQVSYG), 549–575 (ARPTQKKPSETNAYNVTTHANGQVSYG), 576–602 (ARPTYNKPSETNAYNVTTHGNGQVSYG), 603–629 (ARPTYKKPSKTNAYNVTTHANGQVSYG), 630–656 (ARPTQNKPSETNAYNVTTHANGQVSYG), 657–683 (ARPTQNKPSETNAYNVTTHGNGQVSYG), and 684–710 (ARPTYNKPSKTNAYNVTTHADGTATYG). The segment at 495–710 (ARPRFNKPSE…THADGTATYG (216 aa)) is 8 X 27 AA tandem repeats of A-R-P-[RT]-[FQY]-[NK]-K-[PA]-S-[EK]-T-N-A-Y-N-V-T-T-[NH]-[QAG]-[DN]-G-[TQ]-[VA]-[ST]-Y-G. Residues 674 to 697 (THGNGQVSYGARPTYNKPSKTNAY) form a disordered region.

The protein belongs to the staphylocoagulase family.

Its function is as follows. Staphylocoagulase is an extracellular protein which specifically forms a complex with human prothrombin. This complex named staphylothrombin can clot fibrinogen without any proteolytic cleavage of prothrombin. This is Staphylocoagulase from Staphylococcus aureus.